Reading from the N-terminus, the 328-residue chain is Alanine racemase (328 aa).

Lys-33 serves as the catalytic Proton acceptor; specific for D-alanine. The residue at position 33 (Lys-33) is an N6-(pyridoxal phosphate)lysine. Substrate is bound at residue Arg-118. Tyr-237 functions as the Proton acceptor; specific for L-alanine in the catalytic mechanism. Met-283 lines the substrate pocket.

Belongs to the alanine racemase family. Pyridoxal 5'-phosphate is required as a cofactor.

The enzyme catalyses L-alanine = D-alanine. The protein operates within amino-acid biosynthesis; D-alanine biosynthesis; D-alanine from L-alanine: step 1/1. Functionally, catalyzes the interconversion of L-alanine and D-alanine. May also act on other amino acids. The chain is Alanine racemase (alr) from Campylobacter jejuni subsp. jejuni serotype O:2 (strain ATCC 700819 / NCTC 11168).